A 461-amino-acid polypeptide reads, in one-letter code: D-phenylhydantoinase (461 aa).

Residues H59, H61, and K151 each coordinate a divalent metal cation. Position 151 is an N6-carboxylysine (K151). Substrate is bound at residue Y156. A divalent metal cation contacts are provided by H182 and H239. A substrate-binding site is contributed by S286. D313 lines the a divalent metal cation pocket. N335 provides a ligand contact to substrate.

It belongs to the metallo-dependent hydrolases superfamily. Hydantoinase/dihydropyrimidinase family. As to quaternary structure, homotetramer. Requires a divalent metal cation as cofactor. Carboxylation allows a single lysine to coordinate two divalent metal cations.

The enzyme catalyses D-5-phenylhydantoin + H2O = N-carbamoyl-D-phenylglycine + H(+). Catalyzes the stereospecific hydrolysis of the cyclic amide bond of D-hydantoin derivatives with an aromatic side chains at the 5'-position. Has no activity on dihydropyrimidines. The physiological function is unknown. This is D-phenylhydantoinase from Escherichia coli O17:K52:H18 (strain UMN026 / ExPEC).